The following is a 451-amino-acid chain: 2-succinylbenzoate--CoA ligase (451 aa).

It belongs to the ATP-dependent AMP-binding enzyme family. MenE subfamily.

The enzyme catalyses 2-succinylbenzoate + ATP + CoA = 2-succinylbenzoyl-CoA + AMP + diphosphate. The protein operates within quinol/quinone metabolism; 1,4-dihydroxy-2-naphthoate biosynthesis; 1,4-dihydroxy-2-naphthoate from chorismate: step 5/7. It functions in the pathway quinol/quinone metabolism; menaquinone biosynthesis. Its function is as follows. Converts 2-succinylbenzoate (OSB) to 2-succinylbenzoyl-CoA (OSB-CoA). The protein is 2-succinylbenzoate--CoA ligase of Lactococcus lactis subsp. lactis (strain IL1403) (Streptococcus lactis).